Consider the following 117-residue polypeptide: G antigen 5 (117 aa).

A disordered region spans residues 1–117 (MSWRGRSTYY…PEEGEKQSQC (117 aa)). 2 stretches are compositionally biased toward acidic residues: residues 32 to 45 (FSDEVEPATPEEGE) and 87 to 96 (ECEDGPDGQE). Over residues 103–117 (EEVKTPEEGEKQSQC) the composition is skewed to basic and acidic residues.

Belongs to the GAGE family. In terms of tissue distribution, expressed in a variety of tumor tissues but not in normal tissues, except testis.

This chain is G antigen 5 (GAGE5), found in Homo sapiens (Human).